The primary structure comprises 181 residues: 6,7-dimethyl-8-ribityllumazine synthase (181 aa).

Residues F23, 61-63 (SFE), and 85-87 (AVI) contribute to the 5-amino-6-(D-ribitylamino)uracil site. A (2S)-2-hydroxy-3-oxobutyl phosphate-binding site is contributed by 90–91 (QT). Catalysis depends on H93, which acts as the Proton donor. F118 contributes to the 5-amino-6-(D-ribitylamino)uracil binding site. Position 132 (R132) interacts with (2S)-2-hydroxy-3-oxobutyl phosphate.

The protein belongs to the DMRL synthase family.

The catalysed reaction is (2S)-2-hydroxy-3-oxobutyl phosphate + 5-amino-6-(D-ribitylamino)uracil = 6,7-dimethyl-8-(1-D-ribityl)lumazine + phosphate + 2 H2O + H(+). It functions in the pathway cofactor biosynthesis; riboflavin biosynthesis; riboflavin from 2-hydroxy-3-oxobutyl phosphate and 5-amino-6-(D-ribitylamino)uracil: step 1/2. Its function is as follows. Catalyzes the formation of 6,7-dimethyl-8-ribityllumazine by condensation of 5-amino-6-(D-ribitylamino)uracil with 3,4-dihydroxy-2-butanone 4-phosphate. This is the penultimate step in the biosynthesis of riboflavin. This chain is 6,7-dimethyl-8-ribityllumazine synthase, found in Synechococcus elongatus (strain ATCC 33912 / PCC 7942 / FACHB-805) (Anacystis nidulans R2).